The sequence spans 666 residues: UvrABC system protein B (666 aa).

The Helicase ATP-binding domain maps to 26–183; sequence DSFQKGAEKV…RKLLHIQYNR (158 aa). 39–46 is an ATP binding site; sequence GVTGSGKT. A Beta-hairpin motif is present at residues 92 to 115; sequence YYDYYQPEAYVPSSDTFIEKDSSI. The region spanning 429-591 is the Helicase C-terminal domain; the sequence is QIEDLLVEIR…ITPLTIRKEV (163 aa). Residues 625–660 form the UVR domain; the sequence is EVLKDKLREEMMKAAKELDFERAAILRDKMLSIQIN.

It belongs to the UvrB family. Forms a heterotetramer with UvrA during the search for lesions. Interacts with UvrC in an incision complex.

The protein localises to the cytoplasm. In terms of biological role, the UvrABC repair system catalyzes the recognition and processing of DNA lesions. A damage recognition complex composed of 2 UvrA and 2 UvrB subunits scans DNA for abnormalities. Upon binding of the UvrA(2)B(2) complex to a putative damaged site, the DNA wraps around one UvrB monomer. DNA wrap is dependent on ATP binding by UvrB and probably causes local melting of the DNA helix, facilitating insertion of UvrB beta-hairpin between the DNA strands. Then UvrB probes one DNA strand for the presence of a lesion. If a lesion is found the UvrA subunits dissociate and the UvrB-DNA preincision complex is formed. This complex is subsequently bound by UvrC and the second UvrB is released. If no lesion is found, the DNA wraps around the other UvrB subunit that will check the other stand for damage. The chain is UvrABC system protein B from Leptospira borgpetersenii serovar Hardjo-bovis (strain JB197).